Consider the following 146-residue polypeptide: uncharacterized protein (146 aa).

One can recognise an N-acetyltransferase domain in the interval 7-146; the sequence is LEINYKTDEL…EGHDVLLWKP (140 aa).

This is an uncharacterized protein from Staphylococcus aureus (strain COL).